We begin with the raw amino-acid sequence, 87 residues long: Large ribosomal subunit protein bL27 (87 aa).

Residues 1 to 21 (MAHKKAGGSSRNGRDSESKRL) form a disordered region.

This sequence belongs to the bacterial ribosomal protein bL27 family.

This chain is Large ribosomal subunit protein bL27, found in Burkholderia multivorans (strain ATCC 17616 / 249).